A 247-amino-acid polypeptide reads, in one-letter code: Particulate methane monooxygenase beta subunit (247 aa).

6 helical membrane passes run 23-43, 59-79, 86-106, 111-131, 145-165, and 215-235; these read WMALFVVFFVIVGSYHIHAML, LWVTVTPIVLVTFPAAVQSYL, PWGATVCVLGLLLGEWINRYF, WTYFPINFVFPASLVPGAIIL, AIVGAMGWGLIFYPGNWPIIA, and VSAFFSAFMSILIYFMWHFIG.

As to quaternary structure, m.capsulatus has two forms of methane monooxygenase, a soluble (sMMO) and a membrane-bound (particulate) type (pMMO). The particulate type is a nonamer composed of three alpha:beta:gamma heterotrimeric protomers assembled into a cylindrical structure; the beta and gamma subunits comprise the bulk of the membrane-spanning regions and the soluble regions are derived primarily from alpha subunits which form two antiparallel beta-barrel-like structures each. This assembly, also called pMMO hydroxylase (pMMO-H), is proposed to associate with methanol dehydrogenase (MDH), also designated as pMMO-R, to form the pMMO-C complex which seems to have greater methane monooxygenase activity.

The protein localises to the membrane. The catalysed reaction is methane + a quinol + O2 = methanol + a quinone + H2O. Functionally, non-catalytic subunit of the methane monooxygenase that is responsible for the initial oxygenation of methane to methanol in methanotrophs. At least in vitro, specific quinols can replace NADH as reductants. The sequence is that of Particulate methane monooxygenase beta subunit (pmoA1) from Methylococcus capsulatus (strain ATCC 33009 / NCIMB 11132 / Bath).